The following is a 376-amino-acid chain: Inactive CLIP domain-containing serine protease A28 (376 aa).

Positions 1-19 are cleaved as a signal peptide; it reads MKVLLFCIVISLTTLIASG. The 57-residue stretch at 24–80 folds into the Clip domain; sequence EELRCPGGYCVSKYLCPNGTFIDDIKHAQTTQLIGLRAGLDIDDFDDCNDYLLVCCQ. Intrachain disulfides connect Cys28/Cys78, Cys33/Cys71, and Cys39/Cys79. The N-linked (GlcNAc...) asparagine glycan is linked to Asn41. Residues 85–106 are disordered; it reads PTATSTEKPATSDELIEPPPST. The Peptidase S1 domain maps to 114–364; sequence NEGGLIYDLR…YVQWLNEHIV (251 aa). N-linked (GlcNAc...) asparagine glycans are attached at residues Asn125 and Asn279. 3 disulfide bridges follow: Cys251–Cys321, Cys280–Cys301, and Cys311–Cys340. Asn369 carries an N-linked (GlcNAc...) asparagine glycan.

This sequence belongs to the peptidase S1 family. CLIP subfamily. As to quaternary structure, may form a heterodimer of a light chain and a heavy chain; disulfide-linked. Post-translationally, secreted as a full-length protein. Proteolytically cleaved into two chains which probably remain covalently linked. Cleavage is induced by fungus B.bassiana and Gram-positive or Gram-negative bacteria infection.

Its subcellular location is the secreted. In terms of biological role, inactive serine protease which plays an essential role in the innate immune response against bacteria, fungi and protozoa infection by activating the melanization cascade. In the melanization cascade, acts downstream of TEP1, SPCLIP1 and CLIPA8 to promote CLIPC9 proteolytic cleavage. In the susceptible strain G3, appears to be dispensable for parasite P.berghei ookinete elimination which occurs by lysis. Required for the melanization of Gram-positive and Gram-negative bacteria. Required for the melanization of fungus B.bassiana. This Anopheles gambiae (African malaria mosquito) protein is Inactive CLIP domain-containing serine protease A28.